The following is a 387-amino-acid chain: Type 2 DNA topoisomerase 6 subunit A (387 aa).

Residues 12 to 160 form the Topo IIA-type catalytic domain; sequence EARKKAADTL…MLILSKEKGK (149 aa). Y106 acts as the O-(5'-phospho-DNA)-tyrosine intermediate in catalysis. Mg(2+)-binding residues include E207 and D259.

The protein belongs to the TOP6A family. Homodimer. Heterotetramer of two Top6A and two Top6B chains. It depends on Mg(2+) as a cofactor.

It carries out the reaction ATP-dependent breakage, passage and rejoining of double-stranded DNA.. Its function is as follows. Relaxes both positive and negative superturns and exhibits a strong decatenase activity. The protein is Type 2 DNA topoisomerase 6 subunit A of Sulfurisphaera tokodaii (strain DSM 16993 / JCM 10545 / NBRC 100140 / 7) (Sulfolobus tokodaii).